The primary structure comprises 553 residues: Phosphoglucomutase (553 aa).

The tract at residues 1–25 (MQATIKRYPTSPISGQTLGTSGLRK) is disordered. A compositionally biased stretch (polar residues) spans 11-20 (SPISGQTLGT). Residues threonine 20, arginine 24, 117–118 (SH), and lysine 131 each bind substrate. Serine 117 functions as the Phosphoserine intermediate in the catalytic mechanism. Serine 117 contributes to the Mg(2+) binding site. Aspartate 289, aspartate 291, and aspartate 293 together coordinate Mg(2+). Substrate is bound by residues 293 to 294 (DR), threonine 352, 371 to 373 (EES), lysine 384, and arginine 509.

The protein belongs to the phosphohexose mutase family. Requires Mg(2+) as cofactor.

Its subcellular location is the cytoplasm. The enzyme catalyses alpha-D-glucose 1-phosphate = alpha-D-glucose 6-phosphate. Its function is as follows. Catalyzes the reversible conversion of glucose 1-phosphate into glucose 6-phosphate. This enzyme participates in both the breakdown and synthesis of glucose. This Entamoeba histolytica (strain ATCC 30459 / HM-1:IMSS / ABRM) protein is Phosphoglucomutase.